Consider the following 641-residue polypeptide: Chaperone protein DnaK (641 aa).

Position 200 is a phosphothreonine; by autocatalysis (Thr200). Residues 606–623 (AEQGGNADAASGNAQASK) show a composition bias toward low complexity. Residues 606–627 (AEQGGNADAASGNAQASKAADD) form a disordered region.

The protein belongs to the heat shock protein 70 family.

Acts as a chaperone. The chain is Chaperone protein DnaK from Xanthomonas euvesicatoria pv. vesicatoria (strain 85-10) (Xanthomonas campestris pv. vesicatoria).